The primary structure comprises 312 residues: Porphobilinogen deaminase (312 aa).

At Cys-243 the chain carries S-(dipyrrolylmethanemethyl)cysteine.

Belongs to the HMBS family. As to quaternary structure, monomer. It depends on dipyrromethane as a cofactor.

It catalyses the reaction 4 porphobilinogen + H2O = hydroxymethylbilane + 4 NH4(+). It functions in the pathway porphyrin-containing compound metabolism; protoporphyrin-IX biosynthesis; coproporphyrinogen-III from 5-aminolevulinate: step 2/4. Its function is as follows. Tetrapolymerization of the monopyrrole PBG into the hydroxymethylbilane pre-uroporphyrinogen in several discrete steps. This is Porphobilinogen deaminase from Vibrio parahaemolyticus serotype O3:K6 (strain RIMD 2210633).